The chain runs to 335 residues: Dihydroorotate dehydrogenase (quinone) (335 aa).

Residues 58 to 62 and T82 contribute to the FMN site; that span reads AGADK. Residue K62 coordinates substrate. Substrate is bound at residue 107–111; it reads NRNGF. The FMN site is built by N135 and N168. N168 serves as a coordination point for substrate. The Nucleophile role is filled by S171. Residue N173 coordinates substrate. FMN is bound by residues K213 and G241. 242–243 is a substrate binding site; that stretch reads NT. FMN contacts are provided by residues G264, G293, and 314-315; that span reads YS.

Belongs to the dihydroorotate dehydrogenase family. Type 2 subfamily. As to quaternary structure, monomer. The cofactor is FMN.

The protein localises to the cell membrane. The enzyme catalyses (S)-dihydroorotate + a quinone = orotate + a quinol. It participates in pyrimidine metabolism; UMP biosynthesis via de novo pathway; orotate from (S)-dihydroorotate (quinone route): step 1/1. Its function is as follows. Catalyzes the conversion of dihydroorotate to orotate with quinone as electron acceptor. In Actinobacillus pleuropneumoniae serotype 7 (strain AP76), this protein is Dihydroorotate dehydrogenase (quinone).